The sequence spans 129 residues: Putative membrane protein insertion efficiency factor (129 aa).

Belongs to the UPF0161 family.

It localises to the cell inner membrane. Its function is as follows. Could be involved in insertion of integral membrane proteins into the membrane. The chain is Putative membrane protein insertion efficiency factor from Rhodopseudomonas palustris (strain ATCC BAA-98 / CGA009).